Here is a 275-residue protein sequence, read N- to C-terminus: Large ribosomal subunit protein uL2c (275 aa).

The interval 219 to 267 (TVRGSVMNPCDHPHGGGEGRTPIGRTRPLTPWGKPALGKKTRKTKKLSS) is disordered. The span at 255–264 (LGKKTRKTKK) shows a compositional bias: basic residues.

This sequence belongs to the universal ribosomal protein uL2 family. Part of the 50S ribosomal subunit.

The protein resides in the plastid. The protein localises to the chloroplast. The polypeptide is Large ribosomal subunit protein uL2c (rpl2) (Thalassiosira pseudonana (Marine diatom)).